The following is a 114-amino-acid chain: Large ribosomal subunit protein eL31 (114 aa).

Belongs to the eukaryotic ribosomal protein eL31 family.

The polypeptide is Large ribosomal subunit protein eL31 (RPL31) (Eremothecium gossypii (strain ATCC 10895 / CBS 109.51 / FGSC 9923 / NRRL Y-1056) (Yeast)).